The following is a 262-amino-acid chain: 5'-nucleotidase SurE (262 aa).

4 residues coordinate a divalent metal cation: aspartate 8, aspartate 9, serine 41, and asparagine 97.

It belongs to the SurE nucleotidase family. The cofactor is a divalent metal cation.

The protein localises to the cytoplasm. It catalyses the reaction a ribonucleoside 5'-phosphate + H2O = a ribonucleoside + phosphate. In terms of biological role, nucleotidase that shows phosphatase activity on nucleoside 5'-monophosphates. This Methanococcus maripaludis (strain DSM 14266 / JCM 13030 / NBRC 101832 / S2 / LL) protein is 5'-nucleotidase SurE.